Reading from the N-terminus, the 246-residue chain is uncharacterized protein (246 aa).

This is an uncharacterized protein from Escherichia coli O157:H7.